The primary structure comprises 397 residues: Serine/threonine-protein kinase 17A (397 aa).

Residues 1–23 (MIPLEKPGSGGSPSAAASGSGPG) are disordered. Phosphoserine is present on S9. In terms of domain architecture, Protein kinase spans 44–304 (LSPGRELGRG…AEECLKHPWL (261 aa)). Residues 50 to 58 (LGRGKFAVV) and K73 each bind ATP. D169 acts as the Proton acceptor in catalysis.

It belongs to the protein kinase superfamily. CAMK Ser/Thr protein kinase family. DAP kinase subfamily. In terms of processing, autophosphorylated. As to expression, highly expressed in bone marrow. Lower levels in brain, heart, lung, liver and kidney.

The protein localises to the nucleus. The enzyme catalyses L-seryl-[protein] + ATP = O-phospho-L-seryl-[protein] + ADP + H(+). The catalysed reaction is L-threonyl-[protein] + ATP = O-phospho-L-threonyl-[protein] + ADP + H(+). With respect to regulation, inhibited by thiazolidinedione-type compounds: inhibited by furan- and pyridone- thiazolidinediones. Functionally, acts as a positive regulator of apoptosis. May also act as a regulator of cellular reactive oxygen species. The chain is Serine/threonine-protein kinase 17A (STK17A) from Oryctolagus cuniculus (Rabbit).